Here is a 156-residue protein sequence, read N- to C-terminus: Small ribosomal subunit protein uS7 (156 aa).

This sequence belongs to the universal ribosomal protein uS7 family. Part of the 30S ribosomal subunit. Contacts proteins S9 and S11.

Its function is as follows. One of the primary rRNA binding proteins, it binds directly to 16S rRNA where it nucleates assembly of the head domain of the 30S subunit. Is located at the subunit interface close to the decoding center, probably blocks exit of the E-site tRNA. The sequence is that of Small ribosomal subunit protein uS7 from Thermodesulfovibrio yellowstonii (strain ATCC 51303 / DSM 11347 / YP87).